A 217-amino-acid chain; its full sequence is MSAVQRRLPVYKKILEENKKKWMIKEFLEYKLSKYGYIDSEILKTPLGTRIVIYAERPSRIIGKKGVIVKEISNILVNKLGVENPQIDVIDVSKIEAPEMFPKVIAYRIANAMAKGVRFRRVMFVAVRQLMEAGAKGFEIVVSGKLSTERARFEKLTYGKLYKIGYDAKNRVRRAVVHVLLKPGIYGIEVRIAPASLQYSDEYKIKPPVKPETTSQQ.

Positions 24–93 (IKEFLEYKLS…NPQIDVIDVS (70 aa)) constitute a KH type-2 domain.

This sequence belongs to the universal ribosomal protein uS3 family. Part of the 30S ribosomal subunit.

Functionally, binds the lower part of the 30S subunit head. This is Small ribosomal subunit protein uS3 from Pyrobaculum islandicum (strain DSM 4184 / JCM 9189 / GEO3).